The following is a 920-amino-acid chain: Protein translocase subunit SecA 2 (920 aa).

ATP contacts are provided by residues glutamine 91, glycine 109–threonine 113, and aspartate 527. The segment covering glycine 859–aspartate 870 has biased composition (basic and acidic residues). Residues glycine 859–arginine 920 form a disordered region. The segment covering proline 906–arginine 920 has biased composition (basic residues).

This sequence belongs to the SecA family. In terms of assembly, monomer and homodimer. Part of the essential Sec protein translocation apparatus which comprises SecA, SecYEG and auxiliary proteins SecDF. Other proteins may also be involved.

The protein localises to the cell membrane. Its subcellular location is the cytoplasm. The enzyme catalyses ATP + H2O + cellular proteinSide 1 = ADP + phosphate + cellular proteinSide 2.. Functionally, part of the Sec protein translocase complex. Interacts with the SecYEG preprotein conducting channel. Has a central role in coupling the hydrolysis of ATP to the transfer of proteins into and across the cell membrane, serving as an ATP-driven molecular motor driving the stepwise translocation of polypeptide chains across the membrane. This is Protein translocase subunit SecA 2 from Streptomyces avermitilis (strain ATCC 31267 / DSM 46492 / JCM 5070 / NBRC 14893 / NCIMB 12804 / NRRL 8165 / MA-4680).